We begin with the raw amino-acid sequence, 466 residues long: tRNA(Ile)-lysidine synthase (466 aa).

S42 to S47 contacts ATP.

The protein belongs to the tRNA(Ile)-lysidine synthase family.

The protein localises to the cytoplasm. It catalyses the reaction cytidine(34) in tRNA(Ile2) + L-lysine + ATP = lysidine(34) in tRNA(Ile2) + AMP + diphosphate + H(+). In terms of biological role, ligates lysine onto the cytidine present at position 34 of the AUA codon-specific tRNA(Ile) that contains the anticodon CAU, in an ATP-dependent manner. Cytidine is converted to lysidine, thus changing the amino acid specificity of the tRNA from methionine to isoleucine. This Anaplasma marginale (strain St. Maries) protein is tRNA(Ile)-lysidine synthase.